Here is a 117-residue protein sequence, read N- to C-terminus: NADH-ubiquinone oxidoreductase chain 3 (117 aa).

A run of 3 helical transmembrane segments spans residues 8 to 28 (LIYF…SFIF), 61 to 81 (LVAI…PWAV), and 86 to 106 (IGFF…IGFI).

This sequence belongs to the complex I subunit 3 family.

The protein localises to the mitochondrion membrane. It catalyses the reaction a ubiquinone + NADH + 5 H(+)(in) = a ubiquinol + NAD(+) + 4 H(+)(out). Core subunit of the mitochondrial membrane respiratory chain NADH dehydrogenase (Complex I) that is believed to belong to the minimal assembly required for catalysis. Complex I functions in the transfer of electrons from NADH to the respiratory chain. The immediate electron acceptor for the enzyme is believed to be ubiquinone. This Tetraselmis subcordiformis (Marine green alga) protein is NADH-ubiquinone oxidoreductase chain 3 (ND3).